A 428-amino-acid chain; its full sequence is Probable protein phosphatase 2C 5 (428 aa).

Residues 25–297 (RSEKVEKPFV…DDTTCVVVDI (273 aa)) enclose the PPM-type phosphatase domain. Positions 73, 74, 249, and 288 each coordinate Mn(2+).

The protein belongs to the PP2C family. Mg(2+) is required as a cofactor. Mn(2+) serves as cofactor.

The catalysed reaction is O-phospho-L-seryl-[protein] + H2O = L-seryl-[protein] + phosphate. It catalyses the reaction O-phospho-L-threonyl-[protein] + H2O = L-threonyl-[protein] + phosphate. The protein is Probable protein phosphatase 2C 5 of Arabidopsis thaliana (Mouse-ear cress).